Reading from the N-terminus, the 175-residue chain is Peptide deformylase (175 aa).

Residues Cys98 and His140 each contribute to the Fe cation site. The active site involves Glu141. Position 144 (His144) interacts with Fe cation.

The protein belongs to the polypeptide deformylase family. The cofactor is Fe(2+).

The enzyme catalyses N-terminal N-formyl-L-methionyl-[peptide] + H2O = N-terminal L-methionyl-[peptide] + formate. Functionally, removes the formyl group from the N-terminal Met of newly synthesized proteins. Requires at least a dipeptide for an efficient rate of reaction. N-terminal L-methionine is a prerequisite for activity but the enzyme has broad specificity at other positions. In Bradyrhizobium sp. (strain BTAi1 / ATCC BAA-1182), this protein is Peptide deformylase.